A 415-amino-acid polypeptide reads, in one-letter code: MVFAHRMDNSKPHLIIPTLLVPLQNRSCTETATPLPSQYLMELSEEHSWMSNQTDLHYVLKPGEVATASIFFGILWLFSIFGNSLVCLVIHRSRRTQSTTNYFVVSMACADLLISVASTPFVLLQFTTGRWTLGSATCKVVRYFQYLTPGVQIYVLLSICIDRFYTIVYPLSFKVSREKAKKMIAASWVFDAGFVTPVLFFYGSNWDSHCNYFLPSSWEGTAYTVIHFLVGFVIPSVLIILFYQKVIKYIWRIGTDGRTVRRTMNIVPRTKVKTIKMFLILNLLFLLSWLPFHVAQLWHPHEQDYKKSSLVFTAITWISFSSSASKPTLYSIYNANFRRGMKETFCMSSMKCYRSNAYTITTSSRMAKKNYVGISEIPSMAKTITKDSIYDSFDREAKEKKLAWPINSNPPNTFV.

The Extracellular segment spans residues 1–69; sequence MVFAHRMDNS…LKPGEVATAS (69 aa). 2 N-linked (GlcNAc...) asparagine glycosylation sites follow: N25 and N52. The helical transmembrane segment at 70-90 threads the bilayer; that stretch reads IFFGILWLFSIFGNSLVCLVI. Topologically, residues 91–102 are cytoplasmic; sequence HRSRRTQSTTNY. A helical transmembrane segment spans residues 103 to 123; sequence FVVSMACADLLISVASTPFVL. The Extracellular segment spans residues 124–143; that stretch reads LQFTTGRWTLGSATCKVVRY. Cysteines 138 and 210 form a disulfide. A helical transmembrane segment spans residues 144–161; that stretch reads FQYLTPGVQIYVLLSICI. Residues 162–182 lie on the Cytoplasmic side of the membrane; the sequence is DRFYTIVYPLSFKVSREKAKK. The helical transmembrane segment at 183–203 threads the bilayer; sequence MIAASWVFDAGFVTPVLFFYG. The Extracellular segment spans residues 204–221; the sequence is SNWDSHCNYFLPSSWEGT. The helical transmembrane segment at 222–242 threads the bilayer; it reads AYTVIHFLVGFVIPSVLIILF. Residues 243–277 lie on the Cytoplasmic side of the membrane; the sequence is YQKVIKYIWRIGTDGRTVRRTMNIVPRTKVKTIKM. Residues 278–298 form a helical membrane-spanning segment; the sequence is FLILNLLFLLSWLPFHVAQLW. Residues 299-309 lie on the Extracellular side of the membrane; it reads HPHEQDYKKSS. Residues 310-325 traverse the membrane as a helical segment; sequence LVFTAITWISFSSSAS. Over 326-415 the chain is Cytoplasmic; sequence KPTLYSIYNA…INSNPPNTFV (90 aa).

Belongs to the G-protein coupled receptor 1 family. In terms of tissue distribution, abundant expression in the brain.

It is found in the cell membrane. Functionally, G-protein coupled receptor that plays a role in the regulation of circadian rhythms and energy metabolism. Participates in maintaining proper circadian gene expression in the suprachiasmatic nucleus (SCN), the locus of the master circadian clock in the brain. May function as a coordinator of aging-associated metabolic dysfunction, stress response, DNA integrity management, and eventual senescence. Upon binding to adropin, modulates mitochondrial energy metabolism via the p44/42-PDK4 signaling pathway, influencing pyruvate dehydrogenase activity. The sequence is that of Probable G-protein coupled receptor 19 (GPR19) from Homo sapiens (Human).